Reading from the N-terminus, the 107-residue chain is Nucleoid-associated protein CE0210 (107 aa).

It belongs to the YbaB/EbfC family. In terms of assembly, homodimer.

The protein resides in the cytoplasm. It localises to the nucleoid. Its function is as follows. Binds to DNA and alters its conformation. May be involved in regulation of gene expression, nucleoid organization and DNA protection. The protein is Nucleoid-associated protein CE0210 of Corynebacterium efficiens (strain DSM 44549 / YS-314 / AJ 12310 / JCM 11189 / NBRC 100395).